The primary structure comprises 502 residues: L-amino-acid oxidase BmooLAAO-I (502 aa).

Positions 1–18 (MNVFFTFSLLFLAALGSC) are cleaved as a signal peptide. C28 and C191 are disulfide-bonded. Residues 61-62 (MS), 81-82 (EA), R89, and 105-108 (GPMR) each bind FAD. R108 is a substrate binding site. N-linked (GlcNAc...) asparagine glycosylation occurs at N190. H241 contacts substrate. V279 is a binding site for FAD. C349 and C430 are joined by a disulfide. Y390 is a substrate binding site. FAD contacts are provided by residues E475 and 482–487 (GWIDST). Residue 482 to 483 (GW) coordinates substrate.

Belongs to the flavin monoamine oxidase family. FIG1 subfamily. Homodimer; non-covalently linked. It depends on FAD as a cofactor. In terms of processing, N-glycosylated. The enzymatic activity is not affected by deglycosylation. As to expression, expressed by the venom gland.

The protein resides in the secreted. The catalysed reaction is an L-alpha-amino acid + O2 + H2O = a 2-oxocarboxylate + H2O2 + NH4(+). It catalyses the reaction L-leucine + O2 + H2O = 4-methyl-2-oxopentanoate + H2O2 + NH4(+). It carries out the reaction L-phenylalanine + O2 + H2O = 3-phenylpyruvate + H2O2 + NH4(+). The enzyme catalyses L-tryptophan + O2 + H2O = indole-3-pyruvate + H2O2 + NH4(+). The catalysed reaction is L-methionine + O2 + H2O = 4-methylsulfanyl-2-oxobutanoate + H2O2 + NH4(+). It catalyses the reaction L-isoleucine + O2 + H2O = (S)-3-methyl-2-oxopentanoate + H2O2 + NH4(+). It carries out the reaction L-histidine + O2 + H2O = 3-(imidazol-5-yl)pyruvate + H2O2 + NH4(+). The enzyme catalyses L-tyrosine + O2 + H2O = 3-(4-hydroxyphenyl)pyruvate + H2O2 + NH4(+). The catalysed reaction is L-alanine + O2 + H2O = pyruvate + H2O2 + NH4(+). It catalyses the reaction L-valine + O2 + H2O = 3-methyl-2-oxobutanoate + H2O2 + NH4(+). Its enzymatic activities is reduced when it is exposed to Ca(2+), Zn(2+), Al(3+), Cu(2+) or Ni(2+) salts. In terms of biological role, catalyzes an oxidative deamination of predominantly hydrophobic and aromatic L-amino acids, thus producing hydrogen peroxide that may contribute to the toxicity of the venom. Shows very high activity on L-Met, and L-Leu, high activity on L-Ile, L-Phe and L-Tyr and moderate activity on L-His, L-Val and L-Ala. Exhibits diverse biological activities, such as edema, apoptosis of tumor cell lines, antibacterial activities against both Gram-positive and Gram-negative bacteria, as well as induction of platelet aggregation. Effects of snake L-amino oxidases on platelets are controversial, since they either induce aggregation or inhibit agonist-induced aggregation. These different effects are probably due to different experimental conditions. Unlike other snake venom L-amino acid oxidases, does not induce hemorrhage. It may also induce hemolysis. Has parasiticidal activities against and leishmania, as a result of enzyme-catalyzed hydrogen peroxide production. The polypeptide is L-amino-acid oxidase BmooLAAO-I (Bothrops moojeni (Lance-headed viper)).